A 283-amino-acid polypeptide reads, in one-letter code: Aquaporin PIP2-5 (283 aa).

The next 2 membrane-spanning stretches (helical) occupy residues Ala37 to Ile57 and Cys74 to Val94. The NPA 1 signature appears at Asn106 to Ala108. Helical transmembrane passes span Ile125–Phe145, Gly167–Ala187, and Val199–Ile219. The NPA 2 signature appears at Asn227–Ala229. Residues Ile249–Leu269 traverse the membrane as a helical segment.

The protein belongs to the MIP/aquaporin (TC 1.A.8) family. PIP (TC 1.A.8.11) subfamily. Expressed in roots.

It localises to the cell membrane. In terms of biological role, water channel required to facilitate the transport of water across cell membrane. May play a role in root water uptake. This is Aquaporin PIP2-5 (PIP2-5) from Oryza sativa subsp. japonica (Rice).